The chain runs to 326 residues: MASKAGLGQTPATTDARRTQKFYRGSPGRPWLIGAVVIPLLIAAIGYGAFERPQSVTGPTGVLPTLTPTSTRGASALSLSLLSISRSGNTVTLIGDFPDEAAKAALMTALNGLLAPGVNVIDQIHVDPVVRSLDFSSAEPVFTASVPIPDFGLKVERDTVTLTGTAPSSEHKDAVKRAATSTWPDMKIVNNIEVTGQAPPGPPASGPCADLQSAINAVTGGPIAFGNDGASLIPADYEILNRVADKLKACPDARVTINGYTDNTGSEGINIPLSAQRAKIVADYLVARGVAGDHIATVGLGSVNPIASNATPEGRAKNRRVEIVVN.

A disordered region spans residues 1 to 21 (MASKAGLGQTPATTDARRTQK). The tract at residues 1–73 (MASKAGLGQT…PTLTPTSTRG (73 aa)) is required for protein translocation to the outer membrane. A helical membrane pass occupies residues 30–50 (PWLIGAVVIPLLIAAIGYGAF). Positions 127-196 (DPVVRSLDFS…KIVNNIEVTG (70 aa)) constitute a BON domain. Cys-208 and Cys-250 form a disulfide bridge. The region spanning 212–326 (QSAINAVTGG…KNRRVEIVVN (115 aa)) is the OmpA-like domain.

It belongs to the outer membrane OOP (TC 1.B.6) superfamily. ArfA family. Requires Zn(2+) as cofactor.

Its subcellular location is the secreted. The protein resides in the cell wall. It is found in the cell outer membrane. In terms of biological role, probably plays a role in ammonia secretion that neutralizes the medium at pH 5.5, although it does not play a direct role in ammonia transport. The sequence is that of Peptidoglycan-binding protein ArfA (arfA) from Mycobacterium tuberculosis (strain CDC 1551 / Oshkosh).